Here is a 37-residue protein sequence, read N- to C-terminus: Large ribosomal subunit protein bL36B (37 aa).

This sequence belongs to the bacterial ribosomal protein bL36 family.

The protein is Large ribosomal subunit protein bL36B of Paenarthrobacter aurescens (strain TC1).